The following is a 207-amino-acid chain: Small ribosomal subunit protein uS4 (207 aa).

Residues Lys-33–Asn-54 form a disordered region. The span at Gly-42 to Gly-53 shows a compositional bias: polar residues. Residues Ser-97 to Leu-160 form the S4 RNA-binding domain.

This sequence belongs to the universal ribosomal protein uS4 family. In terms of assembly, part of the 30S ribosomal subunit. Contacts protein S5. The interaction surface between S4 and S5 is involved in control of translational fidelity.

In terms of biological role, one of the primary rRNA binding proteins, it binds directly to 16S rRNA where it nucleates assembly of the body of the 30S subunit. Functionally, with S5 and S12 plays an important role in translational accuracy. The chain is Small ribosomal subunit protein uS4 from Cupriavidus pinatubonensis (strain JMP 134 / LMG 1197) (Cupriavidus necator (strain JMP 134)).